The chain runs to 402 residues: Advanced glycosylation end product-specific receptor (402 aa).

The first 22 residues, 1–22 (MPAGTAARAWVLVLALWGAVAG), serve as a signal peptide directing secretion. One can recognise an Ig-like V-type domain in the interval 23–109 (GQNITARIGE…ATNRRGKEVK (87 aa)). Residues 23–340 (GQNITARIGE…VGESGLGTLA (318 aa)) lie on the Extracellular side of the membrane. N-linked (GlcNAc...) asparagine glycans are attached at residues N25 and N80. 2 cysteine pairs are disulfide-bonded: C38–C98 and C143–C206. Ig-like C2-type domains lie at 123–219 (PEIV…RPLN) and 233–315 (PEGI…PPVS). Residues 295–332 (GTYSCVATHPSHGPQESPPVSIRVTETGDEGPAEGSVG) are disordered. Residues 341 to 361 (LALGILGGLGVVALLVGAILW) traverse the membrane as a helical segment. Topologically, residues 362 to 402 (RKRQPRREERKAPESQEDEEERAELNQSEEAEMPENGAGGP) are cytoplasmic. Residues 365–402 (QPRREERKAPESQEDEEERAELNQSEEAEMPENGAGGP) are disordered. Phosphoserine; by ATM is present on residues S376 and S389. The segment covering 376 to 394 (SQEDEEERAELNQSEEAEM) has biased composition (acidic residues).

In terms of assembly, constitutive homodimer; disulfide-linked. Forms homooligomers. Interacts with S100A1 and APP. Interacts with S100B, S100A12 and S100A14. Interacts with TIRAP. Interacts with HMGB1. Interacts with LGP2; this interaction plays an important role in AGER-mediated pro-inflammatory responses and cytokine release. Interacts with double-strand break repair protein MRE11 which is a core component of the MRN complex; the interaction enhances MRE11 endonuclease activity and promotes DNA repair. Interacts with the MCM2-7 complex via interaction with complex member MCM2; the interaction is increased following DNA replication stress and stabilizes the MCM2-7 complex at replication forks. Phosphorylated on its cytoplasmic domain by PKCzeta/PRKCZ upon ligand binding. Phosphorylated by ATM following DNA damage. In terms of processing, targeted by the ubiquitin E3 ligase subunit FBXO10 to mediate its ubiquitination and degradation. Isoform 1: Expressed at higher levels in the coronary arterioles in type 2 diabetic mice (at protein level). Endothelial cells. Expressed in lung, kidney, brain and heart. Most prevalent isoform with the highest level in heart. Isoform 2: Expressed in brain, lung, kidney and small intestine with the highest level in lung. Expressed in brain, lung, kidney and small intestine with the highest level in small intestine (at protein level). Detected in neurons of the cerebrum, bronchial epithelium, endothelial cells, tubular cells of kidney and epithelial cells of small intestine (at protein level). Expression is increased in the kidney of diabetic wild-type mice (at protein level), but not in the other tissues. Expressed only in kidney. Expression is increased in the kidney of diabetic mice. Isoform 3: Expressed in lung, kidney and heart. The second most prevalent isoform with the highest level in lung. Not expressed in brain. Isoform 4: Expressed at very low level in lung only. Isoform 5: Expressed at very low level in lung only. Isoform 6: Expressed at very low level in lung only. Isoform 7: Expressed at very low level in heart only. Isoform 8: Expressed at very low level in lung only. Isoform 9: Expressed at very low level in heart only. Isoform 10: Expressed in lung, brain, heart and kidney with a very high level in kidney. Isoform 11: Expressed in brain, kidney and heart. Not expressed in lung. Isoform 12: Expressed at very low level in lung and kidney. Isoform 13: Expressed at very low level in lung only.

The protein localises to the cell membrane. Its subcellular location is the cell projection. The protein resides in the phagocytic cup. It is found in the early endosome. It localises to the nucleus. The protein localises to the secreted. Cell surface pattern recognition receptor that senses endogenous stress signals with a broad ligand repertoire including advanced glycation end products, S100 proteins, high-mobility group box 1 protein/HMGB1, amyloid beta/APP oligomers, nucleic acids, histones, phospholipids and glycosaminoglycans. Advanced glycosylation end products are nonenzymatically glycosylated proteins which accumulate in vascular tissue in aging and at an accelerated rate in diabetes. These ligands accumulate at inflammatory sites during the pathogenesis of various diseases including diabetes, vascular complications, neurodegenerative disorders and cancers, and RAGE transduces their binding into pro-inflammatory responses. Upon ligand binding, uses TIRAP and MYD88 as adapters to transduce the signal ultimately leading to the induction of inflammatory cytokines IL6, IL8 and TNFalpha through activation of NF-kappa-B. Interaction with S100A12 on endothelium, mononuclear phagocytes, and lymphocytes triggers cellular activation, with generation of key pro-inflammatory mediators. Interaction with S100B after myocardial infarction may play a role in myocyte apoptosis by activating ERK1/2 and p53/TP53 signaling. Contributes to the translocation of amyloid-beta peptide (ABPP) across the cell membrane from the extracellular to the intracellular space in cortical neurons. ABPP-initiated RAGE signaling, especially stimulation of p38 mitogen-activated protein kinase (MAPK), has the capacity to drive a transport system delivering ABPP as a complex with RAGE to the intraneuronal space. Participates in endothelial albumin transcytosis together with HMGB1 through the RAGE/SRC/Caveolin-1 pathway, leading to endothelial hyperpermeability. Mediates the loading of HMGB1 in extracellular vesicles (EVs) that shuttle HMGB1 to hepatocytes by transferrin-mediated endocytosis and subsequently promote hepatocyte pyroptosis by activating the NLRP3 inflammasome. Binds to DNA and promotes extracellular hypomethylated DNA (CpG DNA) uptake by cells via the endosomal route to activate inflammatory responses. Mediates phagocytosis by non-professional phagocytes (NPP) and this is enhanced by binding to ligands including RNA, DNA, HMGB1 and histones. Promotes NPP-mediated phagocytosis of Saccharomyces cerevisiae spores by binding to RNA attached to the spore wall. Also promotes NPP-mediated phagocytosis of apoptotic cells. Following DNA damage, recruited to DNA double-strand break sites where it colocalizes with the MRN repair complex via interaction with double-strand break repair protein MRE11. Enhances the endonuclease activity of MRE11, promoting the end resection of damaged DNA. Promotes DNA damage repair in trophoblasts which enhances trophoblast invasion and contributes to placental development and maintenance. Protects cells from DNA replication stress by localizing to damaged replication forks where it stabilizes the MCM2-7 complex and promotes faithful progression of the replication fork. Its function is as follows. Is able to advanced glycosylation end product (AGE)-induce nuclear factor NF-kappa-B activation. Functionally, down-regulates receptor for advanced glycosylation end products (RAGE)-ligand induced signaling through various MAPK pathways including ERK1/2, p38 and SAPK/JNK. Significantly affects tumor cell properties through decreasing cell migration, invasion, adhesion and proliferation, and increasing cellular apoptosis. Exhibits drastic inhibition on tumorigenesis in vitro. The polypeptide is Advanced glycosylation end product-specific receptor (Ager) (Mus musculus (Mouse)).